The chain runs to 1937 residues: Myosin-8 (1937 aa).

Residues 35 to 84 form the Myosin N-terminal SH3-like domain; sequence DAKTSVFVAEPKESYVKSVIQSKDGGKVTVKTESGATLTVKEDQVFPMNP. T66 and T71 each carry phosphothreonine. The 694-residue stretch at 88 to 781 folds into the Myosin motor domain; sequence DKIEDMAMMT…LLGLLEEMRD (694 aa). N6,N6,N6-trimethyllysine is present on K132. Residue 181–188 participates in ATP binding; that stretch reads GESGAGKT. Y389 carries the post-translational modification Phosphotyrosine. T419 carries the phosphothreonine modification. The residue at position 424 (Y424) is a Phosphotyrosine. Position 625 is a phosphoserine (S625). An actin-binding region spans residues 658 to 680; the sequence is LNKLMTNLRSTHPHFVRCIIPNE. Position 756 is a pros-methylhistidine (H756). The tract at residues 760–774 is actin-binding; sequence KFGHTKVFFKAGLLG. The region spanning 781-813 is the IQ domain; it reads DEKLAQIITRTQAVCRGYLMRVEYQKMLLRRES. A coiled-coil region spans residues 842–1937; it reads LLKSAETEKE…REVHTKISAE (1096 aa). Phosphoserine is present on residues S1091 and S1095. A disordered region spans residues 1125 to 1171; sequence IEAERASRAKAEKQRSDLSRELEEISERLEEAGGATSAQVEMNKKRE. Residues 1127-1155 are compositionally biased toward basic and acidic residues; it reads AERASRAKAEKQRSDLSRELEEISERLEE. 2 positions are modified to phosphoserine: S1161 and S1236. T1254 bears the Phosphothreonine mark. S1260 is modified (phosphoserine). T1285 is modified (phosphothreonine). Phosphoserine occurs at positions 1291, 1302, and 1305. Position 1463 is a phosphotyrosine (Y1463). T1466 is subject to Phosphothreonine. The residue at position 1491 (Y1491) is a Phosphotyrosine. At S1494 the chain carries Phosphoserine. T1500 is modified (phosphothreonine). Position 1513 is a phosphoserine (S1513). At T1516 the chain carries Phosphothreonine. Phosphoserine occurs at positions 1553, 1573, 1602, 1713, and 1725. At T1729 the chain carries Phosphothreonine. S1738 carries the phosphoserine modification.

It belongs to the TRAFAC class myosin-kinesin ATPase superfamily. Myosin family. As to quaternary structure, muscle myosin is a hexameric protein that consists of 2 heavy chain subunits (MHC), 2 alkali light chain subunits (MLC) and 2 regulatory light chain subunits (MLC-2).

It is found in the cytoplasm. The protein resides in the myofibril. In terms of biological role, muscle contraction. In Mus musculus (Mouse), this protein is Myosin-8 (Myh8).